A 258-amino-acid chain; its full sequence is Imidazole glycerol phosphate synthase subunit HisF (258 aa).

Residues D11 and D130 contribute to the active site.

This sequence belongs to the HisA/HisF family. In terms of assembly, heterodimer of HisH and HisF.

It is found in the cytoplasm. It catalyses the reaction 5-[(5-phospho-1-deoxy-D-ribulos-1-ylimino)methylamino]-1-(5-phospho-beta-D-ribosyl)imidazole-4-carboxamide + L-glutamine = D-erythro-1-(imidazol-4-yl)glycerol 3-phosphate + 5-amino-1-(5-phospho-beta-D-ribosyl)imidazole-4-carboxamide + L-glutamate + H(+). It functions in the pathway amino-acid biosynthesis; L-histidine biosynthesis; L-histidine from 5-phospho-alpha-D-ribose 1-diphosphate: step 5/9. Its function is as follows. IGPS catalyzes the conversion of PRFAR and glutamine to IGP, AICAR and glutamate. The HisF subunit catalyzes the cyclization activity that produces IGP and AICAR from PRFAR using the ammonia provided by the HisH subunit. The polypeptide is Imidazole glycerol phosphate synthase subunit HisF (Escherichia coli O17:K52:H18 (strain UMN026 / ExPEC)).